Reading from the N-terminus, the 399-residue chain is Phosphoglycerate kinase (399 aa).

Residues 21–23, Arg36, 59–62, Arg120, and Arg158 each bind substrate; these read DFN and HLGR. ATP contacts are provided by residues Lys209, Gly297, Glu328, and 355–358; that span reads GGDS.

Belongs to the phosphoglycerate kinase family. Monomer.

The protein resides in the cytoplasm. It catalyses the reaction (2R)-3-phosphoglycerate + ATP = (2R)-3-phospho-glyceroyl phosphate + ADP. It participates in carbohydrate degradation; glycolysis; pyruvate from D-glyceraldehyde 3-phosphate: step 2/5. The polypeptide is Phosphoglycerate kinase (Streptococcus thermophilus (strain ATCC BAA-491 / LMD-9)).